The primary structure comprises 850 residues: Protein monoglycylase TTLL8 (850 aa).

Disordered regions lie at residues 1-29 (MEPE…QGIS) and 228-254 (RSSR…DAEN). Residues 222–580 (SHQSCSRSSR…DRSCDIGNFE (359 aa)) enclose the TTL domain. Residues K354, 360–361 (RG), 392–395 (QKYI), 405–407 (KFD), and 449–450 (CN) contribute to the ATP site. Residue R360 participates in a protein binding. Positions 527, 540, and 542 each coordinate Mg(2+). E540 serves as a coordination point for ATP. The tract at residues 627-652 (AQPLKARGPSAMPDPAQGPPSPALQR) is disordered.

The cofactor is Mg(2+).

It localises to the cytoplasm. The protein localises to the cytoskeleton. It is found in the cell projection. Its subcellular location is the cilium. The protein resides in the cilium axoneme. It localises to the flagellum axoneme. It carries out the reaction L-glutamyl-[protein] + glycine + ATP = glycyl-L-glutamyl-[protein] + ADP + phosphate + H(+). Its function is as follows. Monoglycylase which modifies both tubulin and non-tubulin proteins, adding a single glycine to the gamma-carboxyl groups of specific glutamate residues to generate monoglycine side chains within the C-terminal tail of target proteins. Not involved in elongation step of the polyglycylation reaction. Preferentially monoglycylates alpha-tubulin over beta-tubulin. Together with TTLL3, mediates microtubule glycylation of primary and motile cilia, which is essential for their stability and maintenance. Together with TTLL3, glycylates sperm flagella which regulates axonemal dynein motor activity, thereby controlling flagellar beat, directional sperm swimming and male fertility. Monoglycylates non-tubulin proteins such as ANP32A, ANP32B, SET, NCL and NAP1. This chain is Protein monoglycylase TTLL8, found in Homo sapiens (Human).